The chain runs to 127 residues: Fatty acid-binding protein, liver (127 aa).

Methionine 1 carries the post-translational modification N-acetylmethionine. Residue serine 11 is modified to Phosphoserine. N6-succinyllysine occurs at positions 31 and 36. Serine 39 carries the phosphoserine modification. Lysine 46 carries the post-translational modification N6-succinyllysine. The residue at position 51 (threonine 51) is a Phosphothreonine. Lysine 57 and lysine 78 each carry N6-succinyllysine. An N6-acetyllysine; alternate modification is found at lysine 84. At lysine 84 the chain carries N6-succinyllysine; alternate. At lysine 90 the chain carries N6-succinyllysine. At serine 100 the chain carries Phosphoserine. The residue at position 121 (lysine 121) is an N6-succinyllysine.

This sequence belongs to the calycin superfamily. Fatty-acid binding protein (FABP) family.

It localises to the cytoplasm. Its function is as follows. Plays a role in lipoprotein-mediated cholesterol uptake in hepatocytes. Binds cholesterol. Binds free fatty acids and their coenzyme A derivatives, bilirubin, and some other small molecules in the cytoplasm. May be involved in intracellular lipid transport. The chain is Fatty acid-binding protein, liver (Fabp1) from Mus musculus (Mouse).